Here is a 307-residue protein sequence, read N- to C-terminus: Haloalkane dehalogenase (307 aa).

An AB hydrolase-1 domain is found at 34 to 158 (PVLFLHGNPT…FQAFRTADVG (125 aa)). The active-site Nucleophile is the D106. Catalysis depends on E130, which acts as the Proton donor. H272 functions as the Proton acceptor in the catalytic mechanism.

This sequence belongs to the haloalkane dehalogenase family. Type 2 subfamily. In terms of assembly, monomer.

The catalysed reaction is 1-haloalkane + H2O = a halide anion + a primary alcohol + H(+). It participates in xenobiotic degradation; 1,2-dibromoethane degradation. Catalyzes hydrolytic cleavage of carbon-halogen bonds in halogenated aliphatic compounds, leading to the formation of the corresponding primary alcohols, halide ions and protons. Has a broad substrate specificity, which includes mono- and di-chlorinated and brominated alkanes. The highest activity was found with 1,2-dibromoethane, whereas low activity was measured with the analog 1,2-dichloroethane. The sequence is that of Haloalkane dehalogenase (dhaAF) from Mycobacterium sp. (strain GP1).